The sequence spans 114 residues: Cystatin Pr17a (114 aa).

An N-terminal signal peptide occupies residues 1-18; the sequence is MSCLKIITLFLFLAAVIA. The Cystatin domain maps to 31 to 109; it reads GAPEQINPND…QAWLKKTSVK (79 aa). Cys93 and Cys113 form a disulfide bridge.

It belongs to the cystatin family. Expressed by the venom gland (posterior main gland) (at protein level).

It is found in the secreted. This Platymeris rhadamanthus (Red spot assassin bug) protein is Cystatin Pr17a.